A 648-amino-acid polypeptide reads, in one-letter code: MAGAAALRRSARRVVRPGAYALSRALQHPERLLSSQASPDRGGVLGSELGRYPPERVRNFSIIAHVDHGKSTLADRLLELTGTIKKGHGQPQYLDKLQVERERGITVKAQTATMFYRHANNQLPASDQPDAPSYLLNLIDTPGHVDFSYEVSRSLAACQGALLVVDAAQGVQAQTIANFYLAFESNLSIIPVINKIDQPTADPDNVKAQLKRLFDIDPSEALLTSAKTGQGLSQVLPAVIERIPSPPGKCDSPVRMLLLDSYYDEYKGVICHVAVVDGALHKGDKIASAATGRTYEVLDVGIMHPELTPTGVLYTGQVGYVISGMRSTKEARIGDTLHQAKSIVEPLPGFKPARHMVFSGLYPADGSDFDALSHAIEKLTCNDASVSVTKETSTALGMGFRCGFLGLLHMDVFHQRLEQEHGAQVISTIPTVPYIFEYGDGSKVQVENPAALASNPGKRIAACWEPTVIATIIIPKVLRLPNRFFSQRALLKYRLPLREIIVDFYNELKSITSGYATFDYEDSEYQQSDLVKMDILLNGQPVDAMATIVHNQKAQRVGRELVDKLKKFIERQMFEITIQAAVGSKVIARETLSAMRKNVLAKCYGGDITRKKKLLEKQKEGKKRMKRVGSVDIPQEAFHELLKVSNSK.

Positions 55–247 (ERVRNFSIIA…AVIERIPSPP (193 aa)) constitute a tr-type G domain. Residues 64–71 (AHVDHGKS), 140–144 (DTPGH), and 194–197 (NKID) contribute to the GTP site.

It belongs to the TRAFAC class translation factor GTPase superfamily. Classic translation factor GTPase family. LepA subfamily.

Its subcellular location is the mitochondrion inner membrane. It catalyses the reaction GTP + H2O = GDP + phosphate + H(+). In terms of biological role, promotes mitochondrial protein synthesis. May act as a fidelity factor of the translation reaction, by catalyzing a one-codon backward translocation of tRNAs on improperly translocated ribosomes. Binds to mitochondrial ribosomes in a GTP-dependent manner. The protein is Translation factor GUF1 homolog, mitochondrial of Oryza sativa subsp. indica (Rice).